A 380-amino-acid polypeptide reads, in one-letter code: Cyclohex-1-ene-1-carbonyl-CoA dehydrogenase (380 aa).

The active-site Proton acceptor is D91. 5 residues coordinate FAD: L122, A124, T125, S131, and T157. Residue S131 coordinates cyclohex-1-ene-1-carbonyl-CoA. S131 contributes to the cyclohexa-1,5-diene-1-carbonyl-CoA binding site. Positions 178, 242, and 363 each coordinate cyclohex-1-ene-1-carbonyl-CoA. Cyclohexa-1,5-diene-1-carbonyl-CoA is bound by residues K178, R242, and T363. The FAD site is built by T365 and Q367. R375 serves as a coordination point for cyclohex-1-ene-1-carbonyl-CoA. R375 contacts cyclohexa-1,5-diene-1-carbonyl-CoA.

It belongs to the acyl-CoA dehydrogenase family. Homotetramer. The cofactor is FAD.

It carries out the reaction cyclohex-1-ene-1-carbonyl-CoA + oxidized [electron-transfer flavoprotein] + H(+) = cyclohexa-1,5-diene-1-carbonyl-CoA + reduced [electron-transfer flavoprotein]. In terms of biological role, acyl-CoA dehydrogenase involved in the anaerobic degradation of cyclohexane carboxylic acid (CHC). Catalyzes the 1,4-dehydrogenation at C3 and C6 of cyclohex-1-ene-1-carbonyl-CoA (CHeneCoA or Ch1CoA) to cyclohexa-1,5-diene-1-carbonyl-CoA (CHdieneCoA or Ch1,5CoA). Also able to catalyze, at a lower rate, the dehydrogenation at C3 and C4 of CHdieneCoA to benzoyl-CoA. The polypeptide is Cyclohex-1-ene-1-carbonyl-CoA dehydrogenase (Geobacter metallireducens (strain ATCC 53774 / DSM 7210 / GS-15)).